Here is a 513-residue protein sequence, read N- to C-terminus: Glucose-6-phosphate 1-dehydrogenase 2 (513 aa).

The residue at position 2 (A2) is an N-acetylalanine. Residue S8 is modified to Phosphoserine. T10 carries the phosphothreonine modification. NADP(+) contacts are provided by residues 38-45 (GASGDLAK) and R72. Position 89 is an N6-acetyllysine (K89). Y147 and K171 together coordinate NADP(+). D-glucose 6-phosphate-binding positions include K171, 201 to 205 (HYLDK), E239, and D258. K171 bears the N6-(2-hydroxyisobutyryl)lysine; alternate mark. K171 bears the N6-acetyllysine; alternate mark. The Proton acceptor role is filled by H263. Residue R357 participates in NADP(+) binding. Positions 360 and 365 each coordinate D-glucose 6-phosphate. NADP(+)-binding residues include K366, R370, and R393. Residue Q395 participates in D-glucose 6-phosphate binding. Position 421 to 423 (421 to 423 (DLT)) interacts with NADP(+). An N6-acetyllysine modification is found at K432. The NADP(+) site is built by R487 and Y503. Y503 carries the post-translational modification Phosphotyrosine.

It belongs to the glucose-6-phosphate dehydrogenase family. Homotetramer; dimer of dimers. Interacts with SIRT2; the interaction is enhanced by H(2)O(2) treatment. In terms of processing, acetylated by ELP3; acetylation inhibits its homodimerization and enzyme activity. Deacetylated by SIRT2; deacetylation stimulates its enzyme activity. Testis.

It is found in the cytoplasm. The protein localises to the cytosol. Its subcellular location is the membrane. It catalyses the reaction D-glucose 6-phosphate + NADP(+) = 6-phospho-D-glucono-1,5-lactone + NADPH + H(+). It participates in carbohydrate degradation; pentose phosphate pathway; D-ribulose 5-phosphate from D-glucose 6-phosphate (oxidative stage): step 1/3. Functionally, catalyzes the rate-limiting step of the oxidative pentose-phosphate pathway, which represents a route for the dissimilation of carbohydrates besides glycolysis. The main function of this enzyme is to provide reducing power (NADPH) and pentose phosphates for fatty acid and nucleic acid synthesis. This chain is Glucose-6-phosphate 1-dehydrogenase 2 (G6pd2), found in Mus musculus (Mouse).